Here is an 832-residue protein sequence, read N- to C-terminus: WD repeat-containing protein 75 (832 aa).

WD repeat units lie at residues 4–43 (KTDI…KVYS), 47–86 (EEWL…KLWD), 90–134 (GILI…QLVA), 148–187 (KELS…YFFR), 196–233 (LKAT…RLWR), 239–278 (KEYT…VQWQ), 281–320 (DMSK…SIIE), 326–364 (SGLI…QFYS), 378–425 (QQEY…KLWA), 432–474 (SFVL…KAWC), 485–523 (YWSC…TLWS), 527–567 (WELL…CCWN), and 572–609 (ALEW…FVFK). Disordered regions lie at residues 704–723 (QHKL…HTQG) and 759–811 (VREE…AQER). The span at 764–785 (DSSEQEMDSEKEEEESEEEMEA) shows a compositional bias: acidic residues. Over residues 799-811 (DEQKPKLSKAQER) the composition is skewed to basic and acidic residues.

In terms of assembly, component of the proposed t-UTP subcomplex of the ribosomal small subunit (SSU) processome. SSU processome is composed of more than 70 proteins and the RNA chaperone small nucleolar RNA (snoRNA) U3.

The protein localises to the nucleus. The protein resides in the nucleolus. In terms of biological role, ribosome biogenesis factor. Part of the small subunit (SSU) processome, first precursor of the small eukaryotic ribosomal subunit. During the assembly of the SSU processome in the nucleolus, many ribosome biogenesis factors, an RNA chaperone and ribosomal proteins associate with the nascent pre-rRNA and work in concert to generate RNA folding, modifications, rearrangements and cleavage as well as targeted degradation of pre-ribosomal RNA by the RNA exosome. Involved in nucleolar processing of pre-18S ribosomal RNA. Required for optimal pre-ribosomal RNA transcription by RNA polymerase I. In Danio rerio (Zebrafish), this protein is WD repeat-containing protein 75 (wdr75).